A 132-amino-acid polypeptide reads, in one-letter code: Transcriptional regulator MraZ (132 aa).

SpoVT-AbrB domains lie at 5–47 (TYEH…SKDD) and 76–119 (TVEI…SKNK).

Belongs to the MraZ family. As to quaternary structure, forms oligomers.

The protein localises to the cytoplasm. Its subcellular location is the nucleoid. In Mycoplasma capricolum subsp. capricolum (strain California kid / ATCC 27343 / NCTC 10154), this protein is Transcriptional regulator MraZ.